Consider the following 584-residue polypeptide: Aspartate--tRNA(Asp/Asn) ligase (584 aa).

Glu177 is a binding site for L-aspartate. The interval 201-204 is aspartate; sequence QLFK. An L-aspartate-binding site is contributed by Arg223. ATP-binding positions include 223–225 and Gln232; that span reads RDE. His447 contacts L-aspartate. Glu481 is a binding site for ATP. Arg488 serves as a coordination point for L-aspartate. 533–536 is an ATP binding site; sequence GLDR.

It belongs to the class-II aminoacyl-tRNA synthetase family. Type 1 subfamily. Homodimer.

The protein localises to the cytoplasm. It catalyses the reaction tRNA(Asx) + L-aspartate + ATP = L-aspartyl-tRNA(Asx) + AMP + diphosphate. Aspartyl-tRNA synthetase with relaxed tRNA specificity since it is able to aspartylate not only its cognate tRNA(Asp) but also tRNA(Asn). Reaction proceeds in two steps: L-aspartate is first activated by ATP to form Asp-AMP and then transferred to the acceptor end of tRNA(Asp/Asn). This chain is Aspartate--tRNA(Asp/Asn) ligase, found in Chlamydia abortus (strain DSM 27085 / S26/3) (Chlamydophila abortus).